Here is a 200-residue protein sequence, read N- to C-terminus: Thymidylate kinase (200 aa).

Residue 10–17 (GIDGAGKS) participates in ATP binding.

Belongs to the thymidylate kinase family.

It carries out the reaction dTMP + ATP = dTDP + ADP. In terms of biological role, phosphorylation of dTMP to form dTDP in both de novo and salvage pathways of dTTP synthesis. The chain is Thymidylate kinase from Cupriavidus metallidurans (strain ATCC 43123 / DSM 2839 / NBRC 102507 / CH34) (Ralstonia metallidurans).